We begin with the raw amino-acid sequence, 814 residues long: S-layer protein sap (814 aa).

The signal sequence occupies residues 1–29 (MAKTNSYKKVIAGTMTAAMVAGVVSPVAA). SLH domains lie at 30–93 (AGKT…DAKP), 94–150 (SFAD…KVNG), and 152–214 (PATK…AAKV). A BIG2 domain is found at 403-479 (FTSKDFKQNN…TVKDSKGKEL (77 aa)).

Probably glycosylated.

It localises to the secreted. The protein resides in the cell wall. It is found in the S-layer. In terms of biological role, the S-layer is a paracrystalline mono-layered assembly of proteins which coat the surface of bacteria. The sequence is that of S-layer protein sap (sap) from Bacillus anthracis.